A 585-amino-acid polypeptide reads, in one-letter code: Squalene epoxidase 2, mitochondrial (585 aa).

The N-terminal 45 residues, 1 to 45, are a transit peptide targeting the mitochondrion; the sequence is MKPFVIRNLPRFQSTLRSSLLYTNHRPSSRFSLSTRRFTTGATYI. Residues 70–90 form a helical membrane-spanning segment; the sequence is AKIALDQFIASLFTFLLLYIL. Residues 132–133, 152–153, R160, R231, V247, D409, and M422 each bind FAD; these read VA and ER. 3 helical membrane passes run 493–513, 520–540, and 545–565; these read FDYL…LSGL, LVLH…LPFP, and FWLG…IIKA.

This sequence belongs to the squalene monooxygenase family. FAD is required as a cofactor. In terms of tissue distribution, expressed mainly in inflorescences. Detected in seedlings, leaves, stems, and siliques.

It localises to the mitochondrion membrane. The catalysed reaction is squalene + reduced [NADPH--hemoprotein reductase] + O2 = (S)-2,3-epoxysqualene + oxidized [NADPH--hemoprotein reductase] + H2O + H(+). Its pathway is terpene metabolism; lanosterol biosynthesis; lanosterol from farnesyl diphosphate: step 2/3. Functionally, catalyzes the stereospecific oxidation of squalene to (S)-2,3-epoxysqualene, and is considered to be a rate-limiting enzyme in steroid biosynthesis. Produces primarily oxidosqualene. The chain is Squalene epoxidase 2, mitochondrial (SQE2) from Arabidopsis thaliana (Mouse-ear cress).